Reading from the N-terminus, the 160-residue chain is UPF0260 protein Rleg2_0895 (160 aa).

The protein belongs to the UPF0260 family.

The protein is UPF0260 protein Rleg2_0895 of Rhizobium leguminosarum bv. trifolii (strain WSM2304).